A 373-amino-acid chain; its full sequence is Lipoyl amidotransferase LIPT1, mitochondrial (373 aa).

Residues 1 to 25 constitute a mitochondrion transit peptide; that stretch reads MLIPFSMKNCFQLLCNLKVPAAGFK. Residues 57–243 form the BPL/LPL catalytic domain; sequence LEGKPVLFLW…EYATSHQIDN (187 aa). (R)-lipoyl-5'-AMP is bound by residues tyrosine 107, arginine 151, lysine 161, threonine 179, threonine 208, and alanine 210.

Belongs to the LplA family.

Its subcellular location is the mitochondrion. The enzyme catalyses N(6)-[(R)-lipoyl]-L-lysyl-[glycine-cleavage complex H protein] + L-lysyl-[lipoyl-carrier protein] = L-lysyl-[glycine-cleavage complex H protein] + N(6)-[(R)-lipoyl]-L-lysyl-[lipoyl-carrier protein]. It catalyses the reaction (R)-lipoyl-5'-AMP + L-lysyl-[lipoyl-carrier protein] = N(6)-[(R)-lipoyl]-L-lysyl-[lipoyl-carrier protein] + AMP + 2 H(+). It functions in the pathway protein modification; protein lipoylation via exogenous pathway; protein N(6)-(lipoyl)lysine from lipoate: step 2/2. Its activity is regulated as follows. Inhibited by lipoyl-AMP analogs including hexanoyl-, octanoyl- and decanoyl-AMP. Its function is as follows. Lipoyl amidotransferase that catalyzes the transfer of lipoyl moieties from lipoyl-protein H of the glycine cleavage system (lipoyl-GCSH) to E2 subunits of the pyruvate dehydrogenase complex (PDCE2). Unable to catalyze the transfer of octanoyl from octanoyl-GCSH to PDCE2. In vitro, it is also able to catalyze the transfer of the lipoyl group from lipoyl-AMP to the specific lysine residue of lipoyl domains of lipoate-dependent enzymes but this reaction may not be physiologically relevant. This Bos taurus (Bovine) protein is Lipoyl amidotransferase LIPT1, mitochondrial (LIPT1).